Consider the following 61-residue polypeptide: Acetylcholinesterase toxin C (61 aa).

Cystine bridges form between Cys3–Cys22, Cys17–Cys39, Cys41–Cys52, and Cys53–Cys59.

Belongs to the three-finger toxin family. Short-chain subfamily. Acn-esterase inhibitor sub-subfamily. As to expression, expressed by the venom gland.

Its subcellular location is the secreted. Functionally, inhibits acetylcholinesterase. This is Acetylcholinesterase toxin C from Dendroaspis polylepis polylepis (Black mamba).